Here is an 86-residue protein sequence, read N- to C-terminus: YcgL domain-containing protein XOO0428 (86 aa).

The YcgL domain maps to 1-83 (MHAYVYKSQR…PKTRVLAGEC (83 aa)).

In Xanthomonas oryzae pv. oryzae (strain MAFF 311018), this protein is YcgL domain-containing protein XOO0428.